The chain runs to 212 residues: Outer surface protein C (212 aa).

The first 18 residues, 1–18, serve as a signal peptide directing secretion; the sequence is MKKNTLSAILMTLFLFIS. Residue Cys-19 is the site of N-palmitoyl cysteine attachment. The S-diacylglycerol cysteine moiety is linked to residue Cys-19.

Belongs to the OspC lipoprotein family. In terms of assembly, homodimer. Interacts with tick Ixodes ricinus salivary protein Iric-1. Binds human (host) plasminogen. The N-terminus is blocked.

Its subcellular location is the cell outer membrane. It localises to the cell surface. Major immunodominant protein in mammalian hosts. Required for initial stages of mammalian infection. Inhibits macrophage-mediated phagocytosis of the bacteria. Binds human plasminogen; this probably confers an extracellular protease activity on the bacteria that allows it to traverse tissue. Unlike closely related strain B31, its interaction with Ixodes ricinus salivary protein Iric-1 does not protect against antibody-mediated destruction in vitro. This Borreliella afzelii (strain PKo) (Borrelia afzelii) protein is Outer surface protein C.